Reading from the N-terminus, the 347-residue chain is Ataxin-7-like protein 3 (347 aa).

An SGF11-type zinc finger spans residues 84-105 (CVCPNCSRSIAASRFAPHLEKC). Low complexity predominate over residues 116–125 (ANRRIANSNN). Residues 116–184 (ANRRIANSNN…GELSNSDPFK (69 aa)) form a disordered region. S129 and S131 each carry phosphoserine. Residues 132-141 (DQEDNDDIND) show a composition bias toward acidic residues. In terms of domain architecture, SCA7 spans 196–263 (LGPEELRSLL…SLDNDSFDMT (68 aa)). Residues 275–288 (DGSSDLSPSDSGSS) show a composition bias toward low complexity. Residues 275 to 347 (DGSSDLSPSD…PTPSIYDDIN (73 aa)) are disordered. Phosphoserine is present on residues S278, S281, and S326.

Belongs to the SGF11 family. In terms of assembly, component of some SAGA transcription coactivator-HAT complexes, at least composed of ATXN7, ATXN7L3, ENY2, GCN5L2, SUPT3H, TAF10, TRRAP and USP22. Within the SAGA complex, ENY2, ATXN7, ATXN7L3, and USP22 form an additional subcomplex of SAGA called the DUB module (deubiquitination module). Interacts directly with ENY2 and USP22.

Its subcellular location is the nucleus. Its function is as follows. Component of the transcription regulatory histone acetylation (HAT) complex SAGA, a multiprotein complex that activates transcription by remodeling chromatin and mediating histone acetylation and deubiquitination. Within the SAGA complex, participates in a subcomplex that specifically deubiquitinates both histones H2A and H2B. The SAGA complex is recruited to specific gene promoters by activators such as MYC, where it is required for transcription. Required for nuclear receptor-mediated transactivation. Within the complex, it is required to recruit USP22 and ENY2 into the SAGA complex. Regulates H2B monoubiquitination (H2Bub1) levels. Affects subcellular distribution of ENY2, USP22 and ATXN7L3B. In Homo sapiens (Human), this protein is Ataxin-7-like protein 3.